A 289-amino-acid chain; its full sequence is CBY1-interacting BAR domain-containing protein 1 (289 aa).

The transit peptide at 1-47 directs the protein to the mitochondrion; it reads MMRRTLENRNAQTKQLQTAVSNVEKHFGELCQIFAAYVRKTARLRDK. The tract at residues 10-220 is BAR-like; sequence NAQTKQLQTA…NIDEDEDLEV (211 aa). The stretch at 107–178 forms a coiled coil; the sequence is KMKRDDLKAT…INNFERQKMK (72 aa). Positions 265-289 are disordered; the sequence is LRKDQQAEDDEDDELDVTEEENFLK. A compositionally biased stretch (acidic residues) spans 271-289; it reads AEDDEDDELDVTEEENFLK.

This sequence belongs to the CIBAR family. In terms of assembly, homodimer (via BAR-like domain). Heterodimer with FAM92B (via BAR-like domains). Interacts (via BAR-like domain) with CBY1; this interaction is required for targeting FAM92A to centriole and cilium basal body. Interacts (via BAR-like domain) with CBY3; both proteins form a ninefold symmetric structure at the flagellar base; are recruited to the annulus in a mutually dependent manner and regulate annulus positionning.

It is found in the cytoplasm. It localises to the cytoskeleton. The protein localises to the microtubule organizing center. The protein resides in the centrosome. Its subcellular location is the centriole. It is found in the cilium basal body. It localises to the cell projection. The protein localises to the cilium. The protein resides in the nucleus. Its subcellular location is the mitochondrion inner membrane. It is found in the flagellum. Plays a critical role in regulating mitochondrial ultrastructure and function by maintaining the integrity of mitochondrial morphology, particularly the organization of cristae. Preferentially binds to negatively charged phospholipids like cardiolipin and phosphatidylinositol 4,5-bisphosphate enhancing its interaction with mitochondrial membranes. Induces membrane curvature and tubulation, which are critical for maintaining mitochondrial ultrastructure and the organization of cristae. Plays a crucial role in ciliogenesis. May play a role in limb development through its role in ciliogenesis. Plays a key role in the correct positioning of the annulus, a septin-based ring structure in the sperm flagellum, serving both as a physical barrier and a membrane diffusion barrier that separates the midpiece (MP) from the principal piece (PP). This positioning is essential for proper sperm motility and function. Interacts with CBY3 to form a complex which localizes to the curved membrane region of the flagellar pocket. By doing so, may provide stability and rigidity to the periannular membrane to prevent membrane deformation. This function is crucial for halting annulus migration at the proximal end of the fibrous sheath-containing PP. This is CBY1-interacting BAR domain-containing protein 1 from Homo sapiens (Human).